The following is a 180-amino-acid chain: NADH-quinone oxidoreductase subunit I (180 aa).

2 consecutive 4Fe-4S ferredoxin-type domains span residues 48–80 (IVLTRDPDGQERCVACNLCAVACPVGCISLQKA) and 90–119 (EFFRINFSRCIFCGMCEEACPTTAIQLTPD). Residues Cys60, Cys63, Cys66, Cys70, Cys99, Cys102, Cys105, and Cys109 each coordinate [4Fe-4S] cluster.

Belongs to the complex I 23 kDa subunit family. As to quaternary structure, NDH-1 is composed of 13 different subunits. Subunits NuoA, H, J, K, L, M, N constitute the membrane sector of the complex. The cofactor is [4Fe-4S] cluster.

The protein localises to the cell inner membrane. It carries out the reaction a quinone + NADH + 5 H(+)(in) = a quinol + NAD(+) + 4 H(+)(out). In terms of biological role, NDH-1 shuttles electrons from NADH, via FMN and iron-sulfur (Fe-S) centers, to quinones in the respiratory chain. The immediate electron acceptor for the enzyme in this species is believed to be ubiquinone. Couples the redox reaction to proton translocation (for every two electrons transferred, four hydrogen ions are translocated across the cytoplasmic membrane), and thus conserves the redox energy in a proton gradient. In Cronobacter sakazakii (strain ATCC BAA-894) (Enterobacter sakazakii), this protein is NADH-quinone oxidoreductase subunit I.